Reading from the N-terminus, the 489-residue chain is COX3 mRNA-specific translational activator PET494 (489 aa).

The protein resides in the mitochondrion inner membrane. Its function is as follows. Required for the expression of the mitochondrial gene for cytochrome c oxidase subunit III (COX3). This Saccharomyces cerevisiae (strain ATCC 204508 / S288c) (Baker's yeast) protein is COX3 mRNA-specific translational activator PET494 (PET494).